We begin with the raw amino-acid sequence, 392 residues long: Iripin-1 (392 aa).

Residues 1–16 (MKPLVPLLFLLVSCRA) form the signal peptide. Asn-104, Asn-196, and Asn-265 each carry an N-linked (GlcNAc...) asparagine glycan.

This sequence belongs to the serpin family. In terms of assembly, interacts with human KLKB1. Interacts with human ST14. Interacts with human PLG (plasmin). In terms of tissue distribution, highly expressed in salivary gland. Expressed in midgut and ovary.

It is found in the secreted. Its function is as follows. Serine protease inhibitor that modulates blood feeding of ticks on vertebrate species. Modestly inhibits human trypsin, plasma kallikrein (KLKB1), matriptase (ST14) and plasmin (PLG) via a classic serpin inhibitory mechanism. Modestly reduces enzymatic activity of human alpha-chymotrypsin, coagulation factor Xa (F10), factor XIIa (F12), cathepsin G (CTSG), tPA/tissue-type plasminogen activator (PLAT) and uPA/urokinase-type plasminogen activator (PLAU). Probably acts as a substrate rather than an inhibitor for the human neutrophil elastase (ELANE) and thus reduces its enzymatic activity in in vitro assays. Decreases expression of adhesion molecules VCAM1 and CD99 on the surface of human cells. Increases the production of chemokines for neutrophils and monocytes, such as KC/CXCL1, MIP-2/CXCL2 and MIP-1/CCL2, and anti-inflammatory cytokine IL10 in mouse inflammation models. Reduces the recruitment of mouse neutrophils and monocytes to the site of inflammation. Decreases expression of CXCR2 on the surface of mouse neutrophils. Increases expression of integrin ITGAM/ITGB2 on the surface of mouse neutrophils. The chain is Iripin-1 from Ixodes ricinus (Common tick).